Reading from the N-terminus, the 431-residue chain is Phosphomethylpyrimidine synthase (431 aa).

Residues Asn66, Met95, Tyr124, His163, 185–187 (SRG), 226–229 (DGLR), and Glu265 contribute to the substrate site. His269 serves as a coordination point for Zn(2+). Tyr292 contributes to the substrate binding site. His333 is a Zn(2+) binding site. [4Fe-4S] cluster contacts are provided by Cys408, Cys411, and Cys415.

This sequence belongs to the ThiC family. Requires [4Fe-4S] cluster as cofactor.

It carries out the reaction 5-amino-1-(5-phospho-beta-D-ribosyl)imidazole + S-adenosyl-L-methionine = 4-amino-2-methyl-5-(phosphooxymethyl)pyrimidine + CO + 5'-deoxyadenosine + formate + L-methionine + 3 H(+). Its pathway is cofactor biosynthesis; thiamine diphosphate biosynthesis. Its function is as follows. Catalyzes the synthesis of the hydroxymethylpyrimidine phosphate (HMP-P) moiety of thiamine from aminoimidazole ribotide (AIR) in a radical S-adenosyl-L-methionine (SAM)-dependent reaction. This is Phosphomethylpyrimidine synthase from Dehalococcoides mccartyi (strain ATCC BAA-2100 / JCM 16839 / KCTC 5957 / BAV1).